A 398-amino-acid chain; its full sequence is NADH dehydrogenase [ubiquinone] iron-sulfur protein 2 (398 aa).

Residues Cys-261, Cys-267, and Cys-282 each coordinate [4Fe-4S] cluster.

Belongs to the complex I 49 kDa subunit family. Complex I is composed of about 45 different subunits. This is a component of the iron-sulfur (IP) fragment of the enzyme. The cofactor is [4Fe-4S] cluster.

It localises to the mitochondrion. The enzyme catalyses a ubiquinone + NADH + 5 H(+)(in) = a ubiquinol + NAD(+) + 4 H(+)(out). In terms of biological role, core subunit of the mitochondrial membrane respiratory chain NADH dehydrogenase (Complex I) that is believed to belong to the minimal assembly required for catalysis. Complex I functions in the transfer of electrons from NADH to the respiratory chain. The immediate electron acceptor for the enzyme is believed to be ubiquinone. Component of the iron-sulfur (IP) fragment of the enzyme. The protein is NADH dehydrogenase [ubiquinone] iron-sulfur protein 2 (NAD7) of Nephroselmis olivacea (Green alga).